The chain runs to 150 residues: Large ribosomal subunit protein bL9 (150 aa).

Belongs to the bacterial ribosomal protein bL9 family.

Binds to the 23S rRNA. The chain is Large ribosomal subunit protein bL9 from Albidiferax ferrireducens (strain ATCC BAA-621 / DSM 15236 / T118) (Rhodoferax ferrireducens).